Consider the following 423-residue polypeptide: Replication factor C large subunit (423 aa).

An ATP-binding site is contributed by Gly-50–Thr-57.

Belongs to the activator 1 small subunits family. RfcL subfamily. As to quaternary structure, heteromultimer composed of small subunits (RfcS) and large subunits (RfcL).

Part of the RFC clamp loader complex which loads the PCNA sliding clamp onto DNA. This chain is Replication factor C large subunit, found in Staphylothermus marinus (strain ATCC 43588 / DSM 3639 / JCM 9404 / F1).